We begin with the raw amino-acid sequence, 154 residues long: Prefoldin subunit 5 (154 aa).

Position 2 is an N-acetylalanine (A2). Position 42 is an N6-acetyllysine (K42). The residue at position 56 (S56) is a Phosphoserine.

It belongs to the prefoldin subunit alpha family. As to quaternary structure, heterohexamer of two PFD-alpha type and four PFD-beta type subunits. Binds to MYC; interacts with its N-terminal domain. Highly expressed in pancreas and skeletal muscle and moderately in other tissues.

It is found in the nucleus. The protein resides in the cytoplasm. In terms of biological role, binds specifically to cytosolic chaperonin (c-CPN) and transfers target proteins to it. Binds to nascent polypeptide chain and promotes folding in an environment in which there are many competing pathways for nonnative proteins. Represses the transcriptional activity of MYC. The chain is Prefoldin subunit 5 (PFDN5) from Homo sapiens (Human).